Here is a 206-residue protein sequence, read N- to C-terminus: Dephospho-CoA kinase (206 aa).

In terms of domain architecture, DPCK spans T4 to F200. G12–T17 contacts ATP.

This sequence belongs to the CoaE family.

It is found in the cytoplasm. The catalysed reaction is 3'-dephospho-CoA + ATP = ADP + CoA + H(+). It participates in cofactor biosynthesis; coenzyme A biosynthesis; CoA from (R)-pantothenate: step 5/5. Its function is as follows. Catalyzes the phosphorylation of the 3'-hydroxyl group of dephosphocoenzyme A to form coenzyme A. The chain is Dephospho-CoA kinase from Salmonella paratyphi A (strain ATCC 9150 / SARB42).